The sequence spans 139 residues: Phosphoribosyl-AMP cyclohydrolase (139 aa).

Asp95 is a Mg(2+) binding site. Cys96 is a Zn(2+) binding site. Residues Asp97 and Asp99 each coordinate Mg(2+). Positions 114 and 121 each coordinate Zn(2+).

This sequence belongs to the PRA-CH family. As to quaternary structure, homodimer. Requires Mg(2+) as cofactor. Zn(2+) is required as a cofactor.

It localises to the cytoplasm. It carries out the reaction 1-(5-phospho-beta-D-ribosyl)-5'-AMP + H2O = 1-(5-phospho-beta-D-ribosyl)-5-[(5-phospho-beta-D-ribosylamino)methylideneamino]imidazole-4-carboxamide. It participates in amino-acid biosynthesis; L-histidine biosynthesis; L-histidine from 5-phospho-alpha-D-ribose 1-diphosphate: step 3/9. Its function is as follows. Catalyzes the hydrolysis of the adenine ring of phosphoribosyl-AMP. The polypeptide is Phosphoribosyl-AMP cyclohydrolase (Chelativorans sp. (strain BNC1)).